A 165-amino-acid chain; its full sequence is Crossover junction endodeoxyribonuclease RuvC (165 aa).

Catalysis depends on residues Asp-7, Glu-67, and Asp-140. Positions 7, 67, and 140 each coordinate Mg(2+).

Belongs to the RuvC family. In terms of assembly, homodimer which binds Holliday junction (HJ) DNA. The HJ becomes 2-fold symmetrical on binding to RuvC with unstacked arms; it has a different conformation from HJ DNA in complex with RuvA. In the full resolvosome a probable DNA-RuvA(4)-RuvB(12)-RuvC(2) complex forms which resolves the HJ. Mg(2+) is required as a cofactor.

It localises to the cytoplasm. It catalyses the reaction Endonucleolytic cleavage at a junction such as a reciprocal single-stranded crossover between two homologous DNA duplexes (Holliday junction).. The RuvA-RuvB-RuvC complex processes Holliday junction (HJ) DNA during genetic recombination and DNA repair. Endonuclease that resolves HJ intermediates. Cleaves cruciform DNA by making single-stranded nicks across the HJ at symmetrical positions within the homologous arms, yielding a 5'-phosphate and a 3'-hydroxyl group; requires a central core of homology in the junction. The consensus cleavage sequence is 5'-(A/T)TT(C/G)-3'. Cleavage occurs on the 3'-side of the TT dinucleotide at the point of strand exchange. HJ branch migration catalyzed by RuvA-RuvB allows RuvC to scan DNA until it finds its consensus sequence, where it cleaves and resolves the cruciform DNA. The protein is Crossover junction endodeoxyribonuclease RuvC of Desulfitobacterium hafniense (strain DSM 10664 / DCB-2).